Here is a 314-residue protein sequence, read N- to C-terminus: Ketimine reductase mu-crystallin (314 aa).

Residue arginine 47 coordinates 3,3',5-triiodo-L-thyronine. NADPH contacts are provided by serine 91, histidine 92, arginine 119, alanine 144, valine 146, glutamine 147, asparagine 168, arginine 169, threonine 170, asparagine 173, threonine 205, and methionine 206. Residue glutamate 257 participates in 3,3',5-triiodo-L-thyronine binding. Serine 292 lines the NADPH pocket.

Belongs to the ornithine cyclodeaminase/mu-crystallin family. As to quaternary structure, homodimer. Binds the thyroid hormone triiodothyronine (T3); T3 binding inhibits enzymatic activity.

It is found in the cytoplasm. The catalysed reaction is L-pipecolate + NAD(+) = Delta(1)-piperideine-2-carboxylate + NADH + H(+). The enzyme catalyses L-pipecolate + NADP(+) = Delta(1)-piperideine-2-carboxylate + NADPH + H(+). It carries out the reaction L-proline + NADP(+) = 1-pyrroline-2-carboxylate + NADPH + H(+). It catalyses the reaction L-proline + NAD(+) = 1-pyrroline-2-carboxylate + NADH + H(+). The catalysed reaction is (3R)-1,4-thiomorpholine-3-carboxylate + NAD(+) = 3,4-dehydrothiomorpholine-3-carboxylate + NADH + 2 H(+). The enzyme catalyses (3R)-1,4-thiomorpholine-3-carboxylate + NADP(+) = 3,4-dehydrothiomorpholine-3-carboxylate + NADPH + 2 H(+). It carries out the reaction (S)-cystathionine ketimine + NADH + 2 H(+) = (3R,5S)-2,3,5,6,7-pentahydro-1,4-thiazepine-3,5-dicarboxylate + NAD(+). It catalyses the reaction (S)-cystathionine ketimine + NADPH + 2 H(+) = (3R,5S)-2,3,5,6,7-pentahydro-1,4-thiazepine-3,5-dicarboxylate + NADP(+). The catalysed reaction is (R)-lanthionine ketimine + NADPH + 2 H(+) = (3R,5R)-1,4-thiomorpholine-3,5-dicarboxylate + NADP(+). The enzyme catalyses Delta(2)-thiazoline-2-carboxylate + NADPH + 2 H(+) = L-thiazolidine-2-carboxylate + NADP(+). Functionally, catalyzes the NAD(P)H-dependent reduction of imine double bonds of a number of cyclic ketimine substrates, including sulfur-containing cyclic ketimines. Under physiological conditions, it efficiently catalyzes delta(1)-piperideine-2-carboxylate (P2C) and delta(1)-pyrroline-2-carboxylate (Pyr2C) reduction, suggesting a central role in lysine and glutamate metabolism. Additional substrates are (S)-cystathionine ketimine (CysK), 3,4-dehydrothiomorpholine-3-carboxylate (AECK), and (R)-lanthionine ketimine (LK) that is reduced at very low rate compared to other substrates. Also catalyzes the NAD(P)H-dependent reduction of delta(2)-thiazoline-2-carboxylate (T2C). This Bos taurus (Bovine) protein is Ketimine reductase mu-crystallin (CRYM).